The sequence spans 143 residues: Large ribosomal subunit protein uL22c (143 aa).

This sequence belongs to the universal ribosomal protein uL22 family. As to quaternary structure, part of the 50S ribosomal subunit.

The protein resides in the plastid. It is found in the chloroplast. This protein binds specifically to 23S rRNA. Its function is as follows. The globular domain of the protein is located near the polypeptide exit tunnel on the outside of the subunit, while an extended beta-hairpin is found that lines the wall of the exit tunnel in the center of the 70S ribosome. This chain is Large ribosomal subunit protein uL22c (rpl22), found in Piper cenocladum (Ant piper).